The chain runs to 90 residues: Probable Fe(2+)-trafficking protein (90 aa).

Belongs to the Fe(2+)-trafficking protein family.

Its function is as follows. Could be a mediator in iron transactions between iron acquisition and iron-requiring processes, such as synthesis and/or repair of Fe-S clusters in biosynthetic enzymes. The protein is Probable Fe(2+)-trafficking protein of Xylella fastidiosa (strain M23).